The primary structure comprises 386 residues: Probable serine/threonine-protein kinase PBL23 (386 aa).

A lipid anchor (S-palmitoyl cysteine) is attached at cysteine 5. The 279-residue stretch at 82 to 360 (FNPDNQLGEG…SDVVTALEYL (279 aa)) folds into the Protein kinase domain. ATP contacts are provided by residues 88–96 (LGEGGFGRV) and lysine 111. Aspartate 210 acts as the Proton acceptor in catalysis. The segment at 365–386 (TEEDGQTVEGEEEEEEDERSKL) is disordered. Positions 368–386 (DGQTVEGEEEEEEDERSKL) are enriched in acidic residues.

It belongs to the protein kinase superfamily. Ser/Thr protein kinase family.

The protein localises to the cell membrane. It catalyses the reaction L-seryl-[protein] + ATP = O-phospho-L-seryl-[protein] + ADP + H(+). It carries out the reaction L-threonyl-[protein] + ATP = O-phospho-L-threonyl-[protein] + ADP + H(+). In terms of biological role, may be involved in plant defense signaling. This is Probable serine/threonine-protein kinase PBL23 from Arabidopsis thaliana (Mouse-ear cress).